The sequence spans 149 residues: UPF0178 protein Mmwyl1_2258 (149 aa).

It belongs to the UPF0178 family.

The sequence is that of UPF0178 protein Mmwyl1_2258 from Marinomonas sp. (strain MWYL1).